Consider the following 678-residue polypeptide: Pescadillo homolog (678 aa).

Over residues 283–303 (EEEEPEEVDSEAGDEDDDDLP) the composition is skewed to acidic residues. The tract at residues 283–316 (EEEEPEEVDSEAGDEDDDDLPVLDSGTRRRRAAA) is disordered. In terms of domain architecture, BRCT spans 361–451 (VCGSLFRGRV…VLMPTDLYAP (91 aa)). A coiled-coil region spans residues 552–587 (MTRKARKMYNNMKQKEAAKQERVQQLESKKAKLAAT). Residues 563–678 (MKQKEAAKQE…DAAPAKRQRR (116 aa)) form a disordered region. The segment covering 564–581 (KQKEAAKQERVQQLESKK) has biased composition (basic and acidic residues). 2 stretches are compositionally biased toward low complexity: residues 597–618 (KPAA…VAAS) and 630–661 (APAP…AAKE). Positions 662–672 (APAKGGKDAAP) are enriched in basic and acidic residues.

This sequence belongs to the pescadillo family.

It is found in the nucleus. The protein localises to the nucleolus. It localises to the nucleoplasm. In terms of biological role, required for maturation of ribosomal RNAs and formation of the large ribosomal subunit. The sequence is that of Pescadillo homolog from Chlamydomonas reinhardtii (Chlamydomonas smithii).